The chain runs to 333 residues: Holliday junction branch migration complex subunit RuvB (333 aa).

Residues 1–181 are large ATPase domain (RuvB-L); it reads MTRILDNDLI…FGITGHMEYY (181 aa). ATP-binding positions include leucine 20, arginine 21, glycine 62, lysine 65, threonine 66, threonine 67, 128–130, arginine 171, tyrosine 181, and arginine 218; that span reads EDF. Residue threonine 66 coordinates Mg(2+). Residues 182 to 252 are small ATPAse domain (RuvB-S); that stretch reads QTADLTEIVE…ITDKALTMLD (71 aa). The head domain (RuvB-H) stretch occupies residues 255-333; it reads QEGLDYVDQK…HLGYPYEKKH (79 aa). Positions 291, 310, 312, and 315 each coordinate DNA.

It belongs to the RuvB family. As to quaternary structure, homohexamer. Forms an RuvA(8)-RuvB(12)-Holliday junction (HJ) complex. HJ DNA is sandwiched between 2 RuvA tetramers; dsDNA enters through RuvA and exits via RuvB. An RuvB hexamer assembles on each DNA strand where it exits the tetramer. Each RuvB hexamer is contacted by two RuvA subunits (via domain III) on 2 adjacent RuvB subunits; this complex drives branch migration. In the full resolvosome a probable DNA-RuvA(4)-RuvB(12)-RuvC(2) complex forms which resolves the HJ.

Its subcellular location is the cytoplasm. The enzyme catalyses ATP + H2O = ADP + phosphate + H(+). The RuvA-RuvB-RuvC complex processes Holliday junction (HJ) DNA during genetic recombination and DNA repair, while the RuvA-RuvB complex plays an important role in the rescue of blocked DNA replication forks via replication fork reversal (RFR). RuvA specifically binds to HJ cruciform DNA, conferring on it an open structure. The RuvB hexamer acts as an ATP-dependent pump, pulling dsDNA into and through the RuvAB complex. RuvB forms 2 homohexamers on either side of HJ DNA bound by 1 or 2 RuvA tetramers; 4 subunits per hexamer contact DNA at a time. Coordinated motions by a converter formed by DNA-disengaged RuvB subunits stimulates ATP hydrolysis and nucleotide exchange. Immobilization of the converter enables RuvB to convert the ATP-contained energy into a lever motion, pulling 2 nucleotides of DNA out of the RuvA tetramer per ATP hydrolyzed, thus driving DNA branch migration. The RuvB motors rotate together with the DNA substrate, which together with the progressing nucleotide cycle form the mechanistic basis for DNA recombination by continuous HJ branch migration. Branch migration allows RuvC to scan DNA until it finds its consensus sequence, where it cleaves and resolves cruciform DNA. The polypeptide is Holliday junction branch migration complex subunit RuvB (Streptococcus equi subsp. zooepidemicus (strain MGCS10565)).